Reading from the N-terminus, the 384-residue chain is Dual-specificity RNA methyltransferase RlmN (384 aa).

The active-site Proton acceptor is Glu93. Residues 99-339 (EDTRGTLCVS…TTIRKTRGDD (241 aa)) enclose the Radical SAM core domain. Cysteines 106 and 344 form a disulfide. [4Fe-4S] cluster is bound by residues Cys113, Cys117, and Cys120. Residues 170–171 (GE), Ser202, 224–226 (SLH), and Asn301 contribute to the S-adenosyl-L-methionine site. Catalysis depends on Cys344, which acts as the S-methylcysteine intermediate.

It belongs to the radical SAM superfamily. RlmN family. [4Fe-4S] cluster is required as a cofactor.

The protein resides in the cytoplasm. It carries out the reaction adenosine(2503) in 23S rRNA + 2 reduced [2Fe-2S]-[ferredoxin] + 2 S-adenosyl-L-methionine = 2-methyladenosine(2503) in 23S rRNA + 5'-deoxyadenosine + L-methionine + 2 oxidized [2Fe-2S]-[ferredoxin] + S-adenosyl-L-homocysteine. It catalyses the reaction adenosine(37) in tRNA + 2 reduced [2Fe-2S]-[ferredoxin] + 2 S-adenosyl-L-methionine = 2-methyladenosine(37) in tRNA + 5'-deoxyadenosine + L-methionine + 2 oxidized [2Fe-2S]-[ferredoxin] + S-adenosyl-L-homocysteine. Its function is as follows. Specifically methylates position 2 of adenine 2503 in 23S rRNA and position 2 of adenine 37 in tRNAs. m2A2503 modification seems to play a crucial role in the proofreading step occurring at the peptidyl transferase center and thus would serve to optimize ribosomal fidelity. The polypeptide is Dual-specificity RNA methyltransferase RlmN (Cupriavidus metallidurans (strain ATCC 43123 / DSM 2839 / NBRC 102507 / CH34) (Ralstonia metallidurans)).